Consider the following 380-residue polypeptide: Transcription factor Sox-17-alpha-A (380 aa).

2 disordered regions span residues M1–V20 and G40–A59. A DNA-binding region (HMG box) is located at residues I61–K129. A Sox C-terminal domain is found at V264–S379. A disordered region spans residues H292–R312. Positions T328–Y336 match the 9aaTAD motif. A required for transcriptional activity and interaction with ctnnb1 region spans residues E329–L334.

As to quaternary structure, interacts (via C-terminus) with ctnnb1/beta-catenin (via Armadillo repeats); this interaction is required for inhibition of wnt-signaling. In terms of tissue distribution, in early gastrulae, expressed in the vegetal but not animal hemisphere. The vegetal region is fated to become endoderm, and endodermal expression continues throughout gastrulation and neurulation. At tailbud stages, expression is down-regulated and becomes restricted to the most posterior endoderm and the future liver/gall bladder region. By 3-7 days, endodermal expression is restricted to the gall bladder bud. Also expressed in the embryonic gut, with strong expression in the posterior gut during tailbud stages, but by stage 40, expression rises again in the anterior gut. Expressed at a low level in the adult kidney and spleen.

The protein resides in the nucleus. Transcriptional activator. Binds to the DNA sequence 5'-AACAAT-3'. All of the sox17 proteins are required for embryonic endoderm development and gastrulation movements, and show some redundancy in function. In addition, the sox17 proteins have distinct but overlapping roles in later gut development. Acts downstream of vegt-signaling in endoderm differentiation to induce a range of endodermal genes both directly (including endodermin and dhh/chh) and indirectly. Also represses wnt-responsive genes to inhibit wnt/beta-catenin signaling. In Xenopus laevis (African clawed frog), this protein is Transcription factor Sox-17-alpha-A (sox17a-a).